The primary structure comprises 342 residues: Glucokinase (342 aa).

Position 7–12 (7–12 (GDIGGT)) interacts with ATP.

It belongs to the bacterial glucokinase family.

It is found in the cytoplasm. The enzyme catalyses D-glucose + ATP = D-glucose 6-phosphate + ADP + H(+). The protein is Glucokinase of Nostoc sp. (strain PCC 7120 / SAG 25.82 / UTEX 2576).